Reading from the N-terminus, the 72-residue chain is Translation initiation factor IF-1 (72 aa).

Positions 1–72 (MAKEDSIRMQ…NKGRIVYRER (72 aa)) constitute an S1-like domain.

This sequence belongs to the IF-1 family. Component of the 30S ribosomal translation pre-initiation complex which assembles on the 30S ribosome in the order IF-2 and IF-3, IF-1 and N-formylmethionyl-tRNA(fMet); mRNA recruitment can occur at any time during PIC assembly.

It localises to the cytoplasm. Its function is as follows. One of the essential components for the initiation of protein synthesis. Stabilizes the binding of IF-2 and IF-3 on the 30S subunit to which N-formylmethionyl-tRNA(fMet) subsequently binds. Helps modulate mRNA selection, yielding the 30S pre-initiation complex (PIC). Upon addition of the 50S ribosomal subunit IF-1, IF-2 and IF-3 are released leaving the mature 70S translation initiation complex. The protein is Translation initiation factor IF-1 of Halorhodospira halophila (strain DSM 244 / SL1) (Ectothiorhodospira halophila (strain DSM 244 / SL1)).